Here is a 312-residue protein sequence, read N- to C-terminus: Ribosomal protein L11 methyltransferase (312 aa).

Positions 162, 183, 205, and 248 each coordinate S-adenosyl-L-methionine.

It belongs to the methyltransferase superfamily. PrmA family.

The protein resides in the cytoplasm. It catalyses the reaction L-lysyl-[protein] + 3 S-adenosyl-L-methionine = N(6),N(6),N(6)-trimethyl-L-lysyl-[protein] + 3 S-adenosyl-L-homocysteine + 3 H(+). Its function is as follows. Methylates ribosomal protein L11. The protein is Ribosomal protein L11 methyltransferase of Anoxybacillus flavithermus (strain DSM 21510 / WK1).